A 250-amino-acid chain; its full sequence is Protein REVERSION-TO-ETHYLENE SENSITIVITY1 (250 aa).

Transmembrane regions (helical) follow at residues 55–75, 200–220, and 221–241; these read IVWT…HIGL, SVVR…VLVG, and WPFL…FIIA.

Interacts with ETR1 through a region corresponding to its ethylene-binding domain. In terms of tissue distribution, strongly expressed in 1-4-day-old seedlings in the apical hook, cotyledons, root vascular tissue, root tip and root hairs, with little or no expression in the hypocotyl. In light-grown seedlings, expression could also be seen in the apex and young leaves, and disappeared from the cotyledons by 10 days. In mature plants, expressed in floral buds, the style of mature flowers, stems and the rachis.

It is found in the endoplasmic reticulum membrane. The protein localises to the golgi apparatus membrane. Functionally, acts at an early step in the ethylene signaling pathway. Positively regulates ETR1, leading to the negative regulation of ethylene responses. The sequence is that of Protein REVERSION-TO-ETHYLENE SENSITIVITY1 (RTE1) from Arabidopsis thaliana (Mouse-ear cress).